We begin with the raw amino-acid sequence, 548 residues long: MISKINGKLFADMIIQGAQNLSNNADLVDSLNVYPVPDGDTGTNMNLTMTSGREEVENNLSKNIGELGKTFSKGLLMGARGNSGVILSQLFRGFCKNIESESEINSKLLAESFQAGVETAYKAVMKPVEGTILTVAKDAAQAAIEKANNTEDCIELMEYIIVKANESLENTPNLLAVLKEVGVVDSGGKGLLCVYEGFLKALKGEKVEAKVAKLDKDEFVHDEHDFHGVINTEDIIYGYCTEMMVRFGKNKKAFDEQEFRQDMSQFGDSLLVINDEEIVKVHVHTEYPGKVFNYGQQYGELIKLKVENMREQHREVIRKEQHTAKPKMETVETAIITISMGEGISEIFKSMGATHIISGGQTMNPSTEDIVKVIEQSKCKRAIILPNNKNILMASEQAASIVDAEAVVIPTKSIPQGISALFQYDVDATLEENKAQMADSVNNVKSGSLTYAVRDTKIDGVEIKKDAFMGLIEDKIVSSQSDQLTTVTELLNEMLADDSEILTVIIGQDAEQAVTDNMINWIEEQYPDVEVEVHEGGQPIYQYFFSVE.

The DhaL domain maps to 8–200; that stretch reads KLFADMIIQG…LLCVYEGFLK (193 aa).

This is an uncharacterized protein from Staphylococcus aureus (strain MRSA252).